Reading from the N-terminus, the 394-residue chain is Phosphoglycerate kinase (394 aa).

Substrate-binding positions include 21–23 (DFN), arginine 36, 59–62 (HMGR), arginine 118, and arginine 151. ATP contacts are provided by residues lysine 202, glutamate 324, and 350 to 353 (GGDS).

The protein belongs to the phosphoglycerate kinase family. Monomer.

The protein resides in the cytoplasm. It carries out the reaction (2R)-3-phosphoglycerate + ATP = (2R)-3-phospho-glyceroyl phosphate + ADP. It participates in carbohydrate degradation; glycolysis; pyruvate from D-glyceraldehyde 3-phosphate: step 2/5. This is Phosphoglycerate kinase from Exiguobacterium sibiricum (strain DSM 17290 / CCUG 55495 / CIP 109462 / JCM 13490 / 255-15).